A 188-amino-acid polypeptide reads, in one-letter code: uncharacterized protein (188 aa).

An L5-specific motif motif is present at residues I62–K77.

The protein localises to the mitochondrion. This is an uncharacterized protein from Dictyostelium discoideum (Social amoeba).